The chain runs to 471 residues: Heat shock 70 kDa protein 13 (471 aa).

A signal peptide spans 1 to 22 (MAGEMTILGSAVLTLLLAGYLA). Asn-184 is a glycosylation site (N-linked (GlcNAc...) asparagine). The segment at 316–339 (NDSQKPQNADSKLPEDQLTPGDGH) is disordered.

This sequence belongs to the heat shock protein 70 family. In terms of assembly, binds UBQLN2.

It is found in the microsome. The protein localises to the endoplasmic reticulum. Functionally, has peptide-independent ATPase activity. The sequence is that of Heat shock 70 kDa protein 13 (Hspa13) from Rattus norvegicus (Rat).